The following is a 579-amino-acid chain: Aspartate--tRNA(Asp/Asn) ligase (579 aa).

E171 is a binding site for L-aspartate. The tract at residues 195-198 is aspartate; the sequence is QLFK. Position 217 (R217) interacts with L-aspartate. ATP contacts are provided by residues 217–219 and Q226; that span reads RDE. H444 provides a ligand contact to L-aspartate. E475 is an ATP binding site. Position 482 (R482) interacts with L-aspartate. 527–530 provides a ligand contact to ATP; sequence GLDR.

It belongs to the class-II aminoacyl-tRNA synthetase family. Type 1 subfamily. In terms of assembly, homodimer.

It localises to the cytoplasm. The catalysed reaction is tRNA(Asx) + L-aspartate + ATP = L-aspartyl-tRNA(Asx) + AMP + diphosphate. In terms of biological role, aspartyl-tRNA synthetase with relaxed tRNA specificity since it is able to aspartylate not only its cognate tRNA(Asp) but also tRNA(Asn). Reaction proceeds in two steps: L-aspartate is first activated by ATP to form Asp-AMP and then transferred to the acceptor end of tRNA(Asp/Asn). The chain is Aspartate--tRNA(Asp/Asn) ligase from Thermotoga maritima (strain ATCC 43589 / DSM 3109 / JCM 10099 / NBRC 100826 / MSB8).